Consider the following 306-residue polypeptide: Formamidopyrimidine-DNA glycosylase (306 aa).

Pro-2 acts as the Schiff-base intermediate with DNA in catalysis. Glu-3 (proton donor) is an active-site residue. Lys-58 functions as the Proton donor; for beta-elimination activity in the catalytic mechanism. DNA-binding residues include His-114, Arg-136, and Lys-179. The segment at 270 to 306 (SVYDREGEACRTSGCRGTVERIVQAGRSTFYCPHCQK) adopts an FPG-type zinc-finger fold. Arg-296 functions as the Proton donor; for delta-elimination activity in the catalytic mechanism.

This sequence belongs to the FPG family. In terms of assembly, monomer. Requires Zn(2+) as cofactor.

The enzyme catalyses Hydrolysis of DNA containing ring-opened 7-methylguanine residues, releasing 2,6-diamino-4-hydroxy-5-(N-methyl)formamidopyrimidine.. It carries out the reaction 2'-deoxyribonucleotide-(2'-deoxyribose 5'-phosphate)-2'-deoxyribonucleotide-DNA = a 3'-end 2'-deoxyribonucleotide-(2,3-dehydro-2,3-deoxyribose 5'-phosphate)-DNA + a 5'-end 5'-phospho-2'-deoxyribonucleoside-DNA + H(+). Involved in base excision repair of DNA damaged by oxidation or by mutagenic agents. Acts as a DNA glycosylase that recognizes and removes damaged bases. Has a preference for oxidized purines, such as 7,8-dihydro-8-oxoguanine (8-oxoG). Has AP (apurinic/apyrimidinic) lyase activity and introduces nicks in the DNA strand. Cleaves the DNA backbone by beta-delta elimination to generate a single-strand break at the site of the removed base with both 3'- and 5'-phosphates. The sequence is that of Formamidopyrimidine-DNA glycosylase from Sinorhizobium medicae (strain WSM419) (Ensifer medicae).